The sequence spans 146 residues: Large ribosomal subunit protein uL15 (146 aa).

The interval 1–54 (MKLHELRPAAGSKSAPKRVGRGTGSGLGRNAGKGEKGQNARSGGGVRPGFEGGQ) is disordered. 2 stretches are compositionally biased toward gly residues: residues 21 to 31 (RGTGSGLGRNA) and 42 to 52 (SGGGVRPGFEG).

The protein belongs to the universal ribosomal protein uL15 family. In terms of assembly, part of the 50S ribosomal subunit.

In terms of biological role, binds to the 23S rRNA. This Clostridium perfringens (strain ATCC 13124 / DSM 756 / JCM 1290 / NCIMB 6125 / NCTC 8237 / Type A) protein is Large ribosomal subunit protein uL15.